Reading from the N-terminus, the 628-residue chain is Chaperone protein HtpG (628 aa).

The a; substrate-binding stretch occupies residues 1 to 337 (MSEKKYTFET…SADLPLNVSR (337 aa)). The tract at residues 338-554 (EILQHNKVID…DYGMSLHMQK (217 aa)) is b. Positions 555–628 (MMEEAGQGFM…FVKLVNKYIR (74 aa)) are c.

It belongs to the heat shock protein 90 family. Homodimer.

It is found in the cytoplasm. Its function is as follows. Molecular chaperone. Has ATPase activity. The protein is Chaperone protein HtpG of Francisella tularensis subsp. novicida (strain U112).